The following is a 119-amino-acid chain: MRSIENDRSNYQLTQKNKSADGLVFNVVTQDMINKSTKPYRGHRFTKENVRILESWFAKNIENPYLDTKGLENLMKNTSLSRIQIKNWVSNRRRKEKTITIAPELADLLSGEPLAKKKE.

Positions 38 to 100 (KPYRGHRFTK…NRRRKEKTIT (63 aa)) form a DNA-binding region, homeobox; TALE-type.

The protein belongs to the TALE/M-ATYP homeobox family.

It is found in the nucleus. In terms of biological role, probably not a functional protein. Cells lacking A2 show no obvious alterations in mating, sporulation and cell growth. The polypeptide is Putative mating-type protein A2 (MATA2) (Saccharomyces cerevisiae (Baker's yeast)).